The primary structure comprises 682 residues: DNA-directed RNA polymerase subunit beta' (682 aa).

The Zn(2+) site is built by cysteine 69, cysteine 71, cysteine 87, and cysteine 90. The Mg(2+) site is built by aspartate 489, aspartate 491, and aspartate 493.

Belongs to the RNA polymerase beta' chain family. RpoC1 subfamily. In terms of assembly, in plastids the minimal PEP RNA polymerase catalytic core is composed of four subunits: alpha, beta, beta', and beta''. When a (nuclear-encoded) sigma factor is associated with the core the holoenzyme is formed, which can initiate transcription. Mg(2+) serves as cofactor. The cofactor is Zn(2+).

The protein localises to the plastid. It is found in the chloroplast. The enzyme catalyses RNA(n) + a ribonucleoside 5'-triphosphate = RNA(n+1) + diphosphate. Functionally, DNA-dependent RNA polymerase catalyzes the transcription of DNA into RNA using the four ribonucleoside triphosphates as substrates. The chain is DNA-directed RNA polymerase subunit beta' from Brachypodium distachyon (Purple false brome).